A 321-amino-acid chain; its full sequence is Oxidoreductase P35 (321 aa).

The protein belongs to the Gfo/Idh/MocA family.

It is found in the cell surface. Oxidoreductase that may be involved in ulvan degradation. Ulvan is the main polysaccharide component of the Ulvales (green seaweed) cell wall. It is composed of disaccharide building blocks comprising 3-sulfated rhamnose (Rha3S) linked to D-glucuronic acid (GlcA), L-iduronic acid (IduA), or D-xylose (Xyl). This is Oxidoreductase P35 from Formosa agariphila (strain DSM 15362 / KCTC 12365 / LMG 23005 / KMM 3901 / M-2Alg 35-1).